Consider the following 324-residue polypeptide: Acetyl-coenzyme A carboxylase carboxyl transferase subunit alpha (324 aa).

The region spanning 37 to 291 is the CoA carboxyltransferase C-terminal domain; it reads KLERRLDKLK…QNFILQEWLR (255 aa).

It belongs to the AccA family. As to quaternary structure, acetyl-CoA carboxylase is a heterohexamer composed of biotin carboxyl carrier protein (AccB), biotin carboxylase (AccC) and two subunits each of ACCase subunit alpha (AccA) and ACCase subunit beta (AccD).

It localises to the cytoplasm. It catalyses the reaction N(6)-carboxybiotinyl-L-lysyl-[protein] + acetyl-CoA = N(6)-biotinyl-L-lysyl-[protein] + malonyl-CoA. It participates in lipid metabolism; malonyl-CoA biosynthesis; malonyl-CoA from acetyl-CoA: step 1/1. Its function is as follows. Component of the acetyl coenzyme A carboxylase (ACC) complex. First, biotin carboxylase catalyzes the carboxylation of biotin on its carrier protein (BCCP) and then the CO(2) group is transferred by the carboxyltransferase to acetyl-CoA to form malonyl-CoA. The sequence is that of Acetyl-coenzyme A carboxylase carboxyl transferase subunit alpha from Chlamydia caviae (strain ATCC VR-813 / DSM 19441 / 03DC25 / GPIC) (Chlamydophila caviae).